The sequence spans 499 residues: Cobyric acid synthase (499 aa).

A GATase cobBQ-type domain is found at 251 to 442; the sequence is SLDIAVVSLK…LHGVFDNLEW (192 aa). C332 functions as the Nucleophile in the catalytic mechanism. The active site involves H434.

Belongs to the CobB/CobQ family. CobQ subfamily.

It functions in the pathway cofactor biosynthesis; adenosylcobalamin biosynthesis. Catalyzes amidations at positions B, D, E, and G on adenosylcobyrinic A,C-diamide. NH(2) groups are provided by glutamine, and one molecule of ATP is hydrogenolyzed for each amidation. The protein is Cobyric acid synthase of Streptococcus sanguinis (strain SK36).